The primary structure comprises 150 residues: D-aminoacyl-tRNA deacylase (150 aa).

Residues 138-139 carry the Gly-cisPro motif, important for rejection of L-amino acids motif; the sequence is GP.

It belongs to the DTD family. As to quaternary structure, homodimer.

The protein resides in the cytoplasm. It catalyses the reaction glycyl-tRNA(Ala) + H2O = tRNA(Ala) + glycine + H(+). The enzyme catalyses a D-aminoacyl-tRNA + H2O = a tRNA + a D-alpha-amino acid + H(+). Functionally, an aminoacyl-tRNA editing enzyme that deacylates mischarged D-aminoacyl-tRNAs. Also deacylates mischarged glycyl-tRNA(Ala), protecting cells against glycine mischarging by AlaRS. Acts via tRNA-based rather than protein-based catalysis; rejects L-amino acids rather than detecting D-amino acids in the active site. By recycling D-aminoacyl-tRNA to D-amino acids and free tRNA molecules, this enzyme counteracts the toxicity associated with the formation of D-aminoacyl-tRNA entities in vivo and helps enforce protein L-homochirality. The polypeptide is D-aminoacyl-tRNA deacylase (Opitutus terrae (strain DSM 11246 / JCM 15787 / PB90-1)).